We begin with the raw amino-acid sequence, 536 residues long: Formate--tetrahydrofolate ligase (536 aa).

ATP is bound at residue threonine 51–threonine 58.

The protein belongs to the formate--tetrahydrofolate ligase family.

The catalysed reaction is (6S)-5,6,7,8-tetrahydrofolate + formate + ATP = (6R)-10-formyltetrahydrofolate + ADP + phosphate. Its pathway is one-carbon metabolism; tetrahydrofolate interconversion. This is Formate--tetrahydrofolate ligase from Thermoplasma volcanium (strain ATCC 51530 / DSM 4299 / JCM 9571 / NBRC 15438 / GSS1).